The primary structure comprises 146 residues: Small ribosomal subunit protein eS17 (146 aa).

Belongs to the eukaryotic ribosomal protein eS17 family. As to quaternary structure, component of the small ribosomal subunit (SSU). Mature N.crassa ribosomes consist of a small (40S) and a large (60S) subunit. The 40S small subunit contains 1 molecule of ribosomal RNA (18S rRNA) and at least 32 different proteins. The large 60S subunit contains 3 rRNA molecules (26S, 5.8S and 5S rRNA) and at least 42 different proteins.

It localises to the cytoplasm. Component of the ribosome, a large ribonucleoprotein complex responsible for the synthesis of proteins in the cell. The small ribosomal subunit (SSU) binds messenger RNAs (mRNAs) and translates the encoded message by selecting cognate aminoacyl-transfer RNA (tRNA) molecules. The large subunit (LSU) contains the ribosomal catalytic site termed the peptidyl transferase center (PTC), which catalyzes the formation of peptide bonds, thereby polymerizing the amino acids delivered by tRNAs into a polypeptide chain. The nascent polypeptides leave the ribosome through a tunnel in the LSU and interact with protein factors that function in enzymatic processing, targeting, and the membrane insertion of nascent chains at the exit of the ribosomal tunnel. The sequence is that of Small ribosomal subunit protein eS17 (rps-17) from Neurospora crassa (strain ATCC 24698 / 74-OR23-1A / CBS 708.71 / DSM 1257 / FGSC 987).